A 150-amino-acid polypeptide reads, in one-letter code: UPF0178 protein Sbal_1771 (150 aa).

This sequence belongs to the UPF0178 family.

The polypeptide is UPF0178 protein Sbal_1771 (Shewanella baltica (strain OS155 / ATCC BAA-1091)).